Reading from the N-terminus, the 199-residue chain is Oligoribonuclease (199 aa).

Residues 5-170 (LVWIDCEMTG…ADIRESIREL (166 aa)) enclose the Exonuclease domain. Tyr127 is a catalytic residue.

This sequence belongs to the oligoribonuclease family.

Its subcellular location is the cytoplasm. 3'-to-5' exoribonuclease specific for small oligoribonucleotides. The sequence is that of Oligoribonuclease from Rhodococcus jostii (strain RHA1).